A 391-amino-acid polypeptide reads, in one-letter code: Steroid side-chain-cleaving aldolase (391 aa).

Tyrosine 294 acts as the Proton acceptor in catalysis. Residue tyrosine 344 is the Proton donor of the active site.

Belongs to the thiolase-like superfamily. As to quaternary structure, homodimer. Interacts with the ChsH1/ChsH2 hydratase via the DUF35 C-terminal region of ChsH2 (ChsH2-DUF35).

The catalysed reaction is 17-hydroxy-3-oxochol-4-en-22-oyl-CoA = androst-4-ene-3,17-dione + propanoyl-CoA. Functionally, probably involved in bile acid degradation. In vitro, when associated with the ChsH1/ChsH2 hydratase, catalyzes the retroaldol cleavage of 17-hydroxy-3-oxo-4-pregnene-20-carboxyl-CoA (17-HOPC-CoA), forming androst-4-ene-3,17-dione and propionyl-CoA. The in vivo substrate is probably a closely analogous bile acid degradation metabolite. This chain is Steroid side-chain-cleaving aldolase, found in Thermomonospora curvata (strain ATCC 19995 / DSM 43183 / JCM 3096 / KCTC 9072 / NBRC 15933 / NCIMB 10081 / Henssen B9).